The chain runs to 235 residues: Putative homeobox-leucine zipper protein ATHB-51 (235 aa).

Positions 74–133 (EMIKKKRLTSGQLASLERSFQEEIKLDSDRKVKLSRELGLQPRQIAVWFQNRRARWKAKQ) form a DNA-binding region, homeobox. Positions 134–162 (LEQLYDSLRQEYDVVSREKQMLHDEVKKL) are leucine-zipper.

Belongs to the HD-ZIP homeobox family. Class I subfamily. As to expression, widely expressed.

It localises to the nucleus. In terms of biological role, putative transcription factor. This is Putative homeobox-leucine zipper protein ATHB-51 (ATHB-51) from Arabidopsis thaliana (Mouse-ear cress).